A 635-amino-acid chain; its full sequence is Replication factor C small subunit (635 aa).

Residue 51-58 (GPPGTGKT) coordinates ATP.

It belongs to the activator 1 small subunits family. RfcS subfamily. As to quaternary structure, heteromultimer composed of small subunits (RfcS) and large subunits (RfcL). In terms of processing, this protein undergoes a protein self splicing that involves a post-translational excision of the intervening region (intein) followed by peptide ligation.

Functionally, part of the RFC clamp loader complex which loads the PCNA sliding clamp onto DNA. This chain is Replication factor C small subunit (rfcS), found in Methanopyrus kandleri (strain AV19 / DSM 6324 / JCM 9639 / NBRC 100938).